The primary structure comprises 317 residues: DNA-directed RNA polymerase subunit alpha 2 (317 aa).

The segment at 1-227 (MALENLLHPT…NQLRNIVDIE (227 aa)) is alpha N-terminal domain (alpha-NTD). The tract at residues 241 to 317 (INPILLKHVE…TLIENWPQDL (77 aa)) is alpha C-terminal domain (alpha-CTD).

This sequence belongs to the RNA polymerase alpha chain family. As to quaternary structure, homodimer. The RNAP catalytic core consists of 2 alpha, 1 beta, 1 beta' and 1 omega subunit. When a sigma factor is associated with the core the holoenzyme is formed, which can initiate transcription.

It carries out the reaction RNA(n) + a ribonucleoside 5'-triphosphate = RNA(n+1) + diphosphate. DNA-dependent RNA polymerase catalyzes the transcription of DNA into RNA using the four ribonucleoside triphosphates as substrates. This chain is DNA-directed RNA polymerase subunit alpha 2, found in Francisella tularensis subsp. holarctica (strain LVS).